The chain runs to 288 residues: uncharacterized protein (288 aa).

In terms of domain architecture, ATP-grasp spans 107–288 (KQIPTLIGPQ…LAIQLLASIA (182 aa)). ATP-binding positions include Lys-145 and 178-188 (QQYIATSNSEA). The Mg(2+) site is built by Asp-248, Glu-261, and Asn-263. Mn(2+) contacts are provided by Asp-248, Glu-261, and Asn-263.

The protein belongs to the RimK family.

This is an uncharacterized protein from Mycoplasma pneumoniae (strain ATCC 29342 / M129 / Subtype 1) (Mycoplasmoides pneumoniae).